Consider the following 162-residue polypeptide: uncharacterized protein (162 aa).

It localises to the cytoplasm. The protein localises to the nucleus. This is an uncharacterized protein from Schizosaccharomyces pombe (strain 972 / ATCC 24843) (Fission yeast).